The following is a 762-amino-acid chain: uncharacterized protein (762 aa).

The tract at residues 1–26 (MENLKSASPEEDSPRHGDNMGKPKRI) is disordered. Over residues 12 to 21 (DSPRHGDNMG) the composition is skewed to basic and acidic residues. Residues 30-57 (CDMCRKRKIRCDGKQPACSNCVSHGIPC) constitute a DNA-binding region (zn(2)-C6 fungal-type). Residues 647–668 (QSHVPPRISSNHSDTSVKSNSP) are disordered.

It localises to the nucleus. This is an uncharacterized protein from Schizosaccharomyces pombe (strain 972 / ATCC 24843) (Fission yeast).